The chain runs to 490 residues: Protein nucleotidyltransferase YdiU (490 aa).

ATP-binding residues include G89, G91, R92, K112, D124, G125, R175, and R182. The active-site Proton acceptor is D251. The Mg(2+) site is built by N252 and D261. Residue D261 participates in ATP binding.

This sequence belongs to the SELO family. It depends on Mg(2+) as a cofactor. Mn(2+) serves as cofactor.

It carries out the reaction L-seryl-[protein] + ATP = 3-O-(5'-adenylyl)-L-seryl-[protein] + diphosphate. The catalysed reaction is L-threonyl-[protein] + ATP = 3-O-(5'-adenylyl)-L-threonyl-[protein] + diphosphate. The enzyme catalyses L-tyrosyl-[protein] + ATP = O-(5'-adenylyl)-L-tyrosyl-[protein] + diphosphate. It catalyses the reaction L-histidyl-[protein] + UTP = N(tele)-(5'-uridylyl)-L-histidyl-[protein] + diphosphate. It carries out the reaction L-seryl-[protein] + UTP = O-(5'-uridylyl)-L-seryl-[protein] + diphosphate. The catalysed reaction is L-tyrosyl-[protein] + UTP = O-(5'-uridylyl)-L-tyrosyl-[protein] + diphosphate. In terms of biological role, nucleotidyltransferase involved in the post-translational modification of proteins. It can catalyze the addition of adenosine monophosphate (AMP) or uridine monophosphate (UMP) to a protein, resulting in modifications known as AMPylation and UMPylation. This Vibrio vulnificus (strain YJ016) protein is Protein nucleotidyltransferase YdiU.